Here is a 273-residue protein sequence, read N- to C-terminus: Dermonecrotic toxin LspiSicTox-betaIE1ii (273 aa).

His-5 is an active-site residue. 2 residues coordinate Mg(2+): Glu-25 and Asp-27. His-41 serves as the catalytic Nucleophile. 2 disulfide bridges follow: Cys-45/Cys-51 and Cys-47/Cys-189. Residue Asp-85 participates in Mg(2+) binding.

The protein belongs to the arthropod phospholipase D family. Class II subfamily. The cofactor is Mg(2+). As to expression, expressed by the venom gland.

It is found in the secreted. The enzyme catalyses an N-(acyl)-sphingosylphosphocholine = an N-(acyl)-sphingosyl-1,3-cyclic phosphate + choline. The catalysed reaction is an N-(acyl)-sphingosylphosphoethanolamine = an N-(acyl)-sphingosyl-1,3-cyclic phosphate + ethanolamine. It carries out the reaction a 1-acyl-sn-glycero-3-phosphocholine = a 1-acyl-sn-glycero-2,3-cyclic phosphate + choline. It catalyses the reaction a 1-acyl-sn-glycero-3-phosphoethanolamine = a 1-acyl-sn-glycero-2,3-cyclic phosphate + ethanolamine. Functionally, dermonecrotic toxins cleave the phosphodiester linkage between the phosphate and headgroup of certain phospholipids (sphingolipid and lysolipid substrates), forming an alcohol (often choline) and a cyclic phosphate. This toxin acts on sphingomyelin (SM). It may also act on ceramide phosphoethanolamine (CPE), lysophosphatidylcholine (LPC) and lysophosphatidylethanolamine (LPE), but not on lysophosphatidylserine (LPS), and lysophosphatidylglycerol (LPG). It acts by transphosphatidylation, releasing exclusively cyclic phosphate products as second products. Induces dermonecrosis, hemolysis, increased vascular permeability, edema, inflammatory response, and platelet aggregation. This Loxosceles spinulosa (Recluse spider) protein is Dermonecrotic toxin LspiSicTox-betaIE1ii.